The following is a 302-amino-acid chain: Ubiquitin thioesterase OTU1 (302 aa).

Residues 5-83 form a UBX-like region; sequence RCKARSGTQP…IVEEDTSKPS (79 aa). The OTU domain maps to 103–228; it reads LARRVVPADN…GIHYDPLERK (126 aa). The tract at residues 108-114 is cys-loop; that stretch reads VPADNSC. Asp111 is a catalytic residue. Cys114 (nucleophile) is an active-site residue. The variable-loop stretch occupies residues 167-177; sequence IRREETWGGAI. Positions 217–221 are his-loop; that stretch reads YDGIH. A substrate-binding site is contributed by Ile220. Residue His221 is part of the active site. The S2 site stretch occupies residues 245–250; the sequence is DVVLAQ. A C2H2-type zinc finger spans residues 272–296; the sequence is LRCMVCQKGLTGQVEAREHAKETGH. His296 is a catalytic residue.

The protein localises to the cytoplasm. It catalyses the reaction Thiol-dependent hydrolysis of ester, thioester, amide, peptide and isopeptide bonds formed by the C-terminal Gly of ubiquitin (a 76-residue protein attached to proteins as an intracellular targeting signal).. Hydrolase that can remove conjugated ubiquitin from proteins and participates in endoplasmic reticulum-associated degradation (ERAD) for misfolded lumenal proteins. May act by triming the ubiquitin chain on the associated substrate to facilitate their threading through the VCP/p97 pore. Ubiquitin moieties on substrates may present a steric impediment to the threading process when the substrate is transferred to the VCP pore and threaded through VCP's axial channel. Mediates deubiquitination of 'Lys-27'-, 'Lys-29'- and 'Lys-33'-linked polyubiquitin chains. Also able to hydrolyze 'Lys-11'-linked ubiquitin chains. Cleaves both polyubiquitin and di-ubiquitin. The chain is Ubiquitin thioesterase OTU1 (YOD1) from Gallus gallus (Chicken).